The following is a 552-amino-acid chain: Polypyrimidine tract-binding protein 3 (552 aa).

Methionine 1 bears the N-acetylmethionine mark. At serine 17 the chain carries Phosphoserine. Positions 32–43 (MNSSTPSTANGN) are enriched in polar residues. The disordered stretch occupies residues 32–55 (MNSSTPSTANGNDSKKFKRDRPPC). 3 RRM domains span residues 59–143 (RVLH…NLPN), 182–258 (LRII…FSKL), and 358–432 (SVLL…LSKH). Lysine 65 participates in a covalent cross-link: Glycyl lysine isopeptide (Lys-Gly) (interchain with G-Cter in SUMO2). Tyrosine 127 carries the phosphotyrosine modification. Threonine 138 is modified (phosphothreonine). Lysine 216 participates in a covalent cross-link: Glycyl lysine isopeptide (Lys-Gly) (interchain with G-Cter in SUMO2). Lysine 423 carries the post-translational modification N6-acetyllysine. The segment at 435-455 (VQLPREGQEDQGLTKDFSNSP) is disordered. Serine 454 carries the phosphoserine modification. An RRM 4 domain is found at 475–550 (ATLHLSNIPP…HHLRVSFSKS (76 aa)).

In terms of assembly, interacts with THBS4 (via the acidic amphipathic C-terminus). As to expression, expressed in several hematopoietic cell lines examined.

In terms of biological role, RNA-binding protein that mediates pre-mRNA alternative splicing regulation. Plays a role in the regulation of cell proliferation, differentiation and migration. Positive regulator of EPO-dependent erythropoiesis. Participates in cell differentiation regulation by repressing tissue-specific exons. Promotes FAS exon 6 skipping. Binds RNA, preferentially to both poly(G) and poly(U). This chain is Polypyrimidine tract-binding protein 3 (PTBP3), found in Homo sapiens (Human).